A 385-amino-acid chain; its full sequence is Homoserine O-succinyltransferase (385 aa).

Residues 46–355 (NAILICHALS…NSQHGHDAFL (310 aa)) form the AB hydrolase-1 domain. Catalysis depends on Ser-151, which acts as the Nucleophile. Arg-221 contacts substrate. Residues Asp-318 and His-351 contribute to the active site. Asp-352 lines the substrate pocket.

This sequence belongs to the AB hydrolase superfamily. MetX family. Homodimer.

It localises to the cytoplasm. The catalysed reaction is L-homoserine + succinyl-CoA = O-succinyl-L-homoserine + CoA. It functions in the pathway amino-acid biosynthesis; L-methionine biosynthesis via de novo pathway; O-succinyl-L-homoserine from L-homoserine: step 1/1. In terms of biological role, transfers a succinyl group from succinyl-CoA to L-homoserine, forming succinyl-L-homoserine. In Hydrogenovibrio crunogenus (strain DSM 25203 / XCL-2) (Thiomicrospira crunogena), this protein is Homoserine O-succinyltransferase.